A 163-amino-acid polypeptide reads, in one-letter code: Phosphopantetheine adenylyltransferase (163 aa).

Residue Ser11 coordinates substrate. Residues 11–12 and His19 contribute to the ATP site; that span reads SF. 3 residues coordinate substrate: Lys43, Leu75, and Arg89. ATP-binding positions include 90–92, Glu100, and 125–131; these read GLR and FGYLSSS.

Belongs to the bacterial CoaD family. Homohexamer. The cofactor is Mg(2+).

The protein resides in the cytoplasm. It carries out the reaction (R)-4'-phosphopantetheine + ATP + H(+) = 3'-dephospho-CoA + diphosphate. It functions in the pathway cofactor biosynthesis; coenzyme A biosynthesis; CoA from (R)-pantothenate: step 4/5. Functionally, reversibly transfers an adenylyl group from ATP to 4'-phosphopantetheine, yielding dephospho-CoA (dPCoA) and pyrophosphate. This chain is Phosphopantetheine adenylyltransferase, found in Geobacter metallireducens (strain ATCC 53774 / DSM 7210 / GS-15).